The sequence spans 585 residues: Packaging protein UL32 (585 aa).

The segment at 1–25 (MDRVESEEPMDGFESPVFSENTSSN) is disordered. Zn(2+)-binding residues include Cys-107, Cys-110, His-187, Cys-193, Cys-408, Cys-411, His-484, and Cys-491. 2 zinc finger regions span residues 107–193 (CLVC…LHVC) and 408–491 (CMLC…DLLC).

It belongs to the herpesviridae UL32 protein family.

The protein localises to the host cytoplasm. Its subcellular location is the host nucleus. Plays a role in efficient localization of neo-synthesized capsids to nuclear replication compartments, thereby controlling cleavage and packaging of virus genomic DNA. In Varicella-zoster virus (strain Dumas) (HHV-3), this protein is Packaging protein UL32 (26).